Consider the following 390-residue polypeptide: Tuftelin (390 aa).

Coiled coils occupy residues 88 to 126 (DKMI…KLDR) and 162 to 351 (DTCI…IEKQ). Positions 358-390 (STQARAKTENPGSIRISKPPSPKPMPVIRVVET) are disordered.

The protein belongs to the tuftelin family. Interacts with TFIP11. As to expression, expressed in the epidermis (at protein level). Present in the extracellular enamel and is mainly associated with the crystal component.

It is found in the secreted. Involved in the structural organization of the epidermis. Involved in the mineralization and structural organization of enamel. The protein is Tuftelin (TUFT1) of Homo sapiens (Human).